A 323-amino-acid chain; its full sequence is Sphingolipid delta(4)-desaturase/C4-monooxygenase DES2 (323 aa).

The N-myristoyl glycine moiety is linked to residue glycine 2. Helical transmembrane passes span 41-61 and 68-88; these read PNIK…CWLV and WLLF…TLAI. Residues 89–93 carry the Histidine box-1 motif; that stretch reads HDISH. Residues 95–99 are required for C4-hydroxylase activity; sequence TAFGT. The Histidine box-2 motif lies at 128–132; it reads HVDHH. Residues 200-220 form a helical membrane-spanning segment; the sequence is IFALWGIKAIVYLLASSLLGL. A Histidine box-3 motif is present at residues 259–263; it reads HVEHH.

The protein belongs to the fatty acid desaturase type 1 family. DEGS subfamily.

The protein localises to the endoplasmic reticulum membrane. It carries out the reaction a dihydroceramide + 2 Fe(II)-[cytochrome b5] + O2 + 2 H(+) = a phytoceramide + 2 Fe(III)-[cytochrome b5] + H2O. The enzyme catalyses an N-acylsphinganine + 2 Fe(II)-[cytochrome b5] + O2 + 2 H(+) = an N-acylsphing-4-enine + 2 Fe(III)-[cytochrome b5] + 2 H2O. It catalyses the reaction N-octanoylsphinganine + 2 Fe(II)-[cytochrome b5] + O2 + 2 H(+) = N-octanoyl-4-hydroxysphinganine + 2 Fe(III)-[cytochrome b5] + H2O. The catalysed reaction is an N-acylsphinganine + 2 Fe(II)-[cytochrome b5] + O2 + 2 H(+) = an N-acyl-(4R)-4-hydroxysphinganine + 2 Fe(III)-[cytochrome b5] + H2O. The protein operates within membrane lipid metabolism; sphingolipid biosynthesis. Its function is as follows. Bifunctional enzyme which acts both as a sphingolipid delta(4)-desaturase and a sphingolipid C4-monooxygenase. In Rattus norvegicus (Rat), this protein is Sphingolipid delta(4)-desaturase/C4-monooxygenase DES2.